An 88-amino-acid polypeptide reads, in one-letter code: ATPase inhibitor mai-1, mitochondrial (88 aa).

The segment covering 1–18 (MSGSGSGSGAGHGGGSGG) has biased composition (gly residues). The segment at 1–41 (MSGSGSGSGAGHGGGSGGSIREAGGSLGMMGATREEEYFRR) is disordered. Residues 39–87 (FRRQQKDQLDNLKKKLEADMTQSQQEIRDHEKVLEQHQQRLKEIEKGHG) are a coiled coil.

This sequence belongs to the ATPase inhibitor family. Does not seem to include a transit peptide.

It localises to the mitochondrion. Functionally, thought to be a regulatory component of the ATP-synthesizing complex in the mitochondria. The chain is ATPase inhibitor mai-1, mitochondrial (mai-1) from Caenorhabditis elegans.